Here is a 247-residue protein sequence, read N- to C-terminus: MRLIQNMCTITEYPPGTHTECASSSAGTASSRVIKIAVVGGSGVGKTALVVRFLTKRFIGDYERNAGNLYSRQVQIDGMNLAIQVQDTPGVQINDQNLDSNEQLNKSLRWADAVVIVFSITDCKSFDLISRLHQHARQLHPDNRIPIVIVANKADLLHLKQVEPQHGLQLANMLGCTFYEVSVSENYIDVYNAFQVLCKEISKQQNTGTPERRKNSLIPRPKSPNMQDLKRRFKQALSAKVRTATSV.

Positions 29–247 are small GTPase-like; it reads ASSRVIKIAV…SAKVRTATSV (219 aa). Residues 40-47, 87-91, and 152-155 contribute to the GTP site; these read GGSGVGKT, DTPGV, and NKAD. The interval 205–228 is disordered; the sequence is QNTGTPERRKNSLIPRPKSPNMQD.

The protein belongs to the small GTPase superfamily. Ras family.

The catalysed reaction is GTP + H2O = GDP + phosphate + H(+). This Xenopus tropicalis (Western clawed frog) protein is Ras-like protein family member 11B.